Here is a 736-residue protein sequence, read N- to C-terminus: Subtilisin-like protease SBT1.9 (736 aa).

The N-terminal stretch at Met1–Ala20 is a signal peptide. A propeptide spans Glu21–His101 (activation peptide). Positions Tyr25 to His101 constitute an Inhibitor I9 domain. Positions Thr103 to Leu582 constitute a Peptidase S8 domain. Residue Asn112 is glycosylated (N-linked (GlcNAc...) asparagine). The active-site Charge relay system is the Asp133. N-linked (GlcNAc...) asparagine glycosylation occurs at Asn162. Residue His205 is the Charge relay system of the active site. Residues Asn220, Asn381, and Asn453 are each glycosylated (N-linked (GlcNAc...) asparagine). The PA domain maps to Val367–Glu441. The active-site Charge relay system is the Ser529. N-linked (GlcNAc...) asparagine glycosylation occurs at Asn617.

Belongs to the peptidase S8 family.

Its subcellular location is the secreted. The polypeptide is Subtilisin-like protease SBT1.9 (Arabidopsis thaliana (Mouse-ear cress)).